We begin with the raw amino-acid sequence, 189 residues long: Transcription factor FapR (189 aa).

It belongs to the FapR family.

Transcriptional factor involved in regulation of membrane lipid biosynthesis by repressing genes involved in fatty acid and phospholipid metabolism. This Listeria welshimeri serovar 6b (strain ATCC 35897 / DSM 20650 / CCUG 15529 / CIP 8149 / NCTC 11857 / SLCC 5334 / V8) protein is Transcription factor FapR.